A 217-amino-acid polypeptide reads, in one-letter code: Very-long-chain (3R)-3-hydroxyacyl-CoA dehydratase PHS1 (217 aa).

Residues 1–11 (MSKKLASPLSF) are Cytoplasmic-facing. A helical transmembrane segment spans residues 12-29 (LPLYNLLSAVGWSYLLYL). Residues 30–47 (VISLYPKVGQPAFFYQTK) lie on the Lumenal side of the membrane. The helical transmembrane segment at 48-66 (NVATLVQCGAIIEIINSFL) threads the bilayer. At 67–76 (GVVRSPLLTT) the chain is on the cytoplasmic side. A helical membrane pass occupies residues 77–94 (VAQVSSRLLVVLGIFQLL). Residues 95-99 (PNTSG) lie on the Lumenal side of the membrane. Residues 100–117 (VQSVVYISLLLAWSITEI) traverse the membrane as a helical segment. Over 118 to 142 (VRYLYYFFMLVFKNGAPKILILLRY) the chain is Cytoplasmic. The helical transmembrane segment at 143–160 (NLFWILYPTGVASELRII) threads the bilayer. Residues Tyr149 and Glu156 contribute to the active site. Residues 161-178 (YCALNAAESQYSLLYKRI) are Lumenal-facing. A helical membrane pass occupies residues 179–196 (LIAAMLAYIPGFPMLFLH). The Cytoplasmic portion of the chain corresponds to 197-217 (MVAQRKKVMKSLRSSFGKKLI). An Endoplasmic reticulum retention signal motif is present at residues 214–217 (KKLI).

The protein belongs to the very long-chain fatty acids dehydratase HACD family.

It localises to the endoplasmic reticulum membrane. The protein resides in the vacuole membrane. The enzyme catalyses a very-long-chain (3R)-3-hydroxyacyl-CoA = a very-long-chain (2E)-enoyl-CoA + H2O. The catalysed reaction is (3R)-hydroxyeicosanoyl-CoA = (2E)-eicosenoyl-CoA + H2O. It catalyses the reaction (3R)-hydroxydocosanoyl-CoA = (2E)-docosenoyl-CoA + H2O. It carries out the reaction (3R)-hydroxyoctadecanoyl-CoA = (2E)-octadecenoyl-CoA + H2O. The enzyme catalyses (3R)-hydroxytetracosanoyl-CoA = (2E)-tetracosenoyl-CoA + H2O. The catalysed reaction is (3R)-hydroxyhexacosanoyl-CoA = (2E)-hexacosenoyl-CoA + H2O. It catalyses the reaction (3R)-hydroxyhexadecanoyl-CoA = (2E)-hexadecenoyl-CoA + H2O. It participates in lipid metabolism; fatty acid biosynthesis. Catalyzes the third of the four reactions of the long-chain fatty acids elongation cycle. This endoplasmic reticulum-bound enzymatic process, allows the addition of two carbons to the chain of long- and very long-chain fatty acids/VLCFAs per cycle. This enzyme catalyzes the dehydration of the 3-hydroxyacyl-CoA intermediate into trans-2,3-enoyl-CoA, within each cycle of fatty acid elongation. Thereby, it participates in the production of VLCFAs of different chain lengths that are involved in multiple biological processes as precursors of membrane lipids and lipid mediators. The sequence is that of Very-long-chain (3R)-3-hydroxyacyl-CoA dehydratase PHS1 (PHS1) from Saccharomyces cerevisiae (strain ATCC 204508 / S288c) (Baker's yeast).